Consider the following 346-residue polypeptide: N-acetyl-gamma-glutamyl-phosphate reductase (346 aa).

The active site involves cysteine 150.

This sequence belongs to the NAGSA dehydrogenase family. Type 1 subfamily.

The protein localises to the cytoplasm. It carries out the reaction N-acetyl-L-glutamate 5-semialdehyde + phosphate + NADP(+) = N-acetyl-L-glutamyl 5-phosphate + NADPH + H(+). It participates in amino-acid biosynthesis; L-arginine biosynthesis; N(2)-acetyl-L-ornithine from L-glutamate: step 3/4. Functionally, catalyzes the NADPH-dependent reduction of N-acetyl-5-glutamyl phosphate to yield N-acetyl-L-glutamate 5-semialdehyde. This is N-acetyl-gamma-glutamyl-phosphate reductase from Acetivibrio thermocellus (strain ATCC 27405 / DSM 1237 / JCM 9322 / NBRC 103400 / NCIMB 10682 / NRRL B-4536 / VPI 7372) (Clostridium thermocellum).